The chain runs to 570 residues: Protein B602L (570 aa).

A run of 20 repeats spans residues 161–164 (CADT), 165–168 (NAST), 169–172 (SADT), 173–176 (NAST), 177–180 (CADT), 181–184 (NVDT), 185–188 (CAST), 189–192 (CADT), 193–196 (NVDT), 197–200 (CADT), 201–204 (CAST), 205–208 (CAST), 209–212 (CAST), 213–216 (CAST), 217–220 (CADT), 221–224 (NVDT), 225–228 (CADT), 229–232 (CVST), 233–236 (CAST), and 237–240 (CANT). The tract at residues 161–240 (CADTNASTSA…STCASTCANT (80 aa)) is 20 X 4 AA tandem repeats of [CNS]-[ATV]-[DNS]-T.

Belongs to the asfivirus B602L family.

The protein resides in the host cytoplasm. In terms of biological role, plays an essential role in the assembly of the icosahedral capsid of the virus. Allows the assembly of 3 molecules of hexon protein p72 and formation of a thermostable trimer. This chain is Protein B602L, found in African swine fever virus (isolate Tick/South Africa/Pretoriuskop Pr4/1996) (ASFV).